The primary structure comprises 206 residues: Small ribosomal subunit protein uS4 (206 aa).

Residues serine 96–alanine 158 form the S4 RNA-binding domain.

The protein belongs to the universal ribosomal protein uS4 family. In terms of assembly, part of the 30S ribosomal subunit. Contacts protein S5. The interaction surface between S4 and S5 is involved in control of translational fidelity.

In terms of biological role, one of the primary rRNA binding proteins, it binds directly to 16S rRNA where it nucleates assembly of the body of the 30S subunit. With S5 and S12 plays an important role in translational accuracy. The polypeptide is Small ribosomal subunit protein uS4 (Francisella tularensis subsp. mediasiatica (strain FSC147)).